The sequence spans 910 residues: Alanine--tRNA ligase (910 aa).

The span at 488 to 505 (RHEEKKEDSKSEKGENTA) shows a compositional bias: basic and acidic residues. The tract at residues 488-507 (RHEEKKEDSKSEKGENTAEK) is disordered. Histidine 614, histidine 618, cysteine 718, and histidine 722 together coordinate Zn(2+).

This sequence belongs to the class-II aminoacyl-tRNA synthetase family. The cofactor is Zn(2+).

The protein localises to the cytoplasm. It catalyses the reaction tRNA(Ala) + L-alanine + ATP = L-alanyl-tRNA(Ala) + AMP + diphosphate. Functionally, catalyzes the attachment of alanine to tRNA(Ala) in a two-step reaction: alanine is first activated by ATP to form Ala-AMP and then transferred to the acceptor end of tRNA(Ala). Also edits incorrectly charged Ser-tRNA(Ala) and Gly-tRNA(Ala) via its editing domain. The protein is Alanine--tRNA ligase of Methanococcus aeolicus (strain ATCC BAA-1280 / DSM 17508 / OCM 812 / Nankai-3).